The sequence spans 204 residues: Bombinin-like peptides 1 (204 aa).

The segment at residues 1-16 is a signal peptide (or 18); that stretch reads MNFKYIVAVSILIASA. An asparagine amide mark is found at Asn-70 and Asn-133.

It belongs to the bombinin family. Expressed by the skin glands.

The protein resides in the secreted. Its function is as follows. Has antimicrobial activity, but no hemolytic activity. Preference on killing Gram-negative non-enteric bacteria. This is Bombinin-like peptides 1 from Bombina orientalis (Oriental fire-bellied toad).